The chain runs to 109 residues: Class I hydrophobin 7 (109 aa).

The N-terminal stretch at 1-17 is a signal peptide; it reads MFAQSFIITALAALAVA. 4 cysteine pairs are disulfide-bonded: Cys28–Cys88, Cys35–Cys82, Cys36–Cys69, and Cys89–Cys102.

This sequence belongs to the fungal hydrophobin family. Self-assembles to form functional amyloid fibrils called rodlets. Self-assembly into fibrillar rodlets occurs spontaneously at hydrophobic:hydrophilic interfaces and the rodlets further associate laterally to form amphipathic monolayers.

It localises to the secreted. The protein localises to the cell wall. In terms of biological role, aerial growth, conidiation, and dispersal of filamentous fungi in the environment rely upon a capability of their secreting small amphipathic proteins called hydrophobins (HPBs) with low sequence identity. Class I can self-assemble into an outermost layer of rodlet bundles on aerial cell surfaces, conferring cellular hydrophobicity that supports fungal growth, development and dispersal; whereas Class II form highly ordered films at water-air interfaces through intermolecular interactions but contribute nothing to the rodlet structure. Hydph7 is a class I hydrophobin involved in fruiting body development. The sequence is that of Class I hydrophobin 7 from Pleurotus ostreatus (strain PC15) (Oyster mushroom).